The primary structure comprises 195 residues: E3 ubiquitin-protein ligase ZNRF1 (195 aa).

Polar residues predominate over residues 1 to 10; it reads MGGKQSSASR. 2 disordered regions span residues 1–36 and 61–84; these read MGGK…HFRA and PFGL…DSRG. The N-myristoyl glycine moiety is linked to residue Gly-2. A compositionally biased stretch (low complexity) spans 18-29; the sequence is VSSDDSAVPPSS. The segment at 152–193 adopts an RING-type; atypical zinc-finger fold; sequence CVICLEELSQGDTIARLPCLCIYHKSCIDSWFEVNRCCPEHP.

The protein resides in the endosome. It is found in the lysosome. Its subcellular location is the membrane. The enzyme catalyses S-ubiquitinyl-[E2 ubiquitin-conjugating enzyme]-L-cysteine + [acceptor protein]-L-lysine = [E2 ubiquitin-conjugating enzyme]-L-cysteine + N(6)-ubiquitinyl-[acceptor protein]-L-lysine.. Its pathway is protein modification; protein ubiquitination. E3 ubiquitin-protein ligase that plays a role in neuron cells differentiation. Plays a role in the establishment and maintenance of neuronal transmission and plasticity. The protein is E3 ubiquitin-protein ligase ZNRF1 (znrf1) of Xenopus tropicalis (Western clawed frog).